Reading from the N-terminus, the 391-residue chain is Formate-dependent phosphoribosylglycinamide formyltransferase (391 aa).

N(1)-(5-phospho-beta-D-ribosyl)glycinamide-binding positions include 20–21 (EL) and E80. Residues R112, K153, 158–163 (SSGKGQ), 193–196 (EGFI), and E201 contribute to the ATP site. In terms of domain architecture, ATP-grasp spans 117 to 306 (RLAAEELGLT…EFALHVRAFT (190 aa)). E265 and E277 together coordinate Mg(2+). N(1)-(5-phospho-beta-D-ribosyl)glycinamide contacts are provided by residues D284, K354, and 361 to 362 (RR).

It belongs to the PurK/PurT family. As to quaternary structure, homodimer.

It catalyses the reaction N(1)-(5-phospho-beta-D-ribosyl)glycinamide + formate + ATP = N(2)-formyl-N(1)-(5-phospho-beta-D-ribosyl)glycinamide + ADP + phosphate + H(+). The protein operates within purine metabolism; IMP biosynthesis via de novo pathway; N(2)-formyl-N(1)-(5-phospho-D-ribosyl)glycinamide from N(1)-(5-phospho-D-ribosyl)glycinamide (formate route): step 1/1. Its function is as follows. Involved in the de novo purine biosynthesis. Catalyzes the transfer of formate to 5-phospho-ribosyl-glycinamide (GAR), producing 5-phospho-ribosyl-N-formylglycinamide (FGAR). Formate is provided by PurU via hydrolysis of 10-formyl-tetrahydrofolate. In Vibrio vulnificus (strain CMCP6), this protein is Formate-dependent phosphoribosylglycinamide formyltransferase.